The primary structure comprises 214 residues: Potassium-transporting ATPase KdpC subunit (214 aa).

A helical membrane pass occupies residues 17–37 (LWVITALIYPFSMIAIGQILF).

It belongs to the KdpC family. The system is composed of three essential subunits: KdpA, KdpB and KdpC.

The protein localises to the cell inner membrane. Part of the high-affinity ATP-driven potassium transport (or Kdp) system, which catalyzes the hydrolysis of ATP coupled with the electrogenic transport of potassium into the cytoplasm. This subunit acts as a catalytic chaperone that increases the ATP-binding affinity of the ATP-hydrolyzing subunit KdpB by the formation of a transient KdpB/KdpC/ATP ternary complex. The sequence is that of Potassium-transporting ATPase KdpC subunit from Microcystis aeruginosa (strain NIES-843 / IAM M-2473).